The chain runs to 453 residues: Chromosomal replication initiator protein DnaA (453 aa).

The segment at Met-1–Gln-79 is domain I, interacts with DnaA modulators. A domain II region spans residues Gln-79 to Ser-111. The interval Tyr-112–Ser-330 is domain III, AAA+ region. ATP-binding residues include Gly-156, Gly-158, Lys-159, and Thr-160. Residues Arg-331 to Pro-453 are domain IV, binds dsDNA.

The protein belongs to the DnaA family. As to quaternary structure, oligomerizes as a right-handed, spiral filament on DNA at oriC.

The protein resides in the cytoplasm. Its function is as follows. Plays an essential role in the initiation and regulation of chromosomal replication. ATP-DnaA binds to the origin of replication (oriC) to initiate formation of the DNA replication initiation complex once per cell cycle. Binds the DnaA box (a 9 base pair repeat at the origin) and separates the double-stranded (ds)DNA. Forms a right-handed helical filament on oriC DNA; dsDNA binds to the exterior of the filament while single-stranded (ss)DNA is stabiized in the filament's interior. The ATP-DnaA-oriC complex binds and stabilizes one strand of the AT-rich DNA unwinding element (DUE), permitting loading of DNA polymerase. After initiation quickly degrades to an ADP-DnaA complex that is not apt for DNA replication. Binds acidic phospholipids. The polypeptide is Chromosomal replication initiator protein DnaA (Lachnoclostridium phytofermentans (strain ATCC 700394 / DSM 18823 / ISDg) (Clostridium phytofermentans)).